A 186-amino-acid polypeptide reads, in one-letter code: NADH-ubiquinone oxidoreductase 17.8 kDa subunit, mitochondrial (186 aa).

A mitochondrion-targeting transit peptide spans methionine 1–tyrosine 26. Residues asparagine 22 to alanine 49 are disordered. The span at tyrosine 26–alanine 49 shows a compositional bias: basic and acidic residues. Residues leucine 58–phenylalanine 78 traverse the membrane as a helical segment.

Complex I is composed of about 40 different subunits.

It localises to the mitochondrion inner membrane. The catalysed reaction is a ubiquinone + NADH + 5 H(+)(in) = a ubiquinol + NAD(+) + 4 H(+)(out). Transfer of electrons from NADH to the respiratory chain. The immediate electron acceptor for the enzyme is believed to be ubiquinone. The polypeptide is NADH-ubiquinone oxidoreductase 17.8 kDa subunit, mitochondrial (nuo17.8) (Neurospora crassa (strain ATCC 24698 / 74-OR23-1A / CBS 708.71 / DSM 1257 / FGSC 987)).